We begin with the raw amino-acid sequence, 260 residues long: DNA-directed RNA polymerase subunit Rpo3 (260 aa).

It belongs to the archaeal Rpo3/eukaryotic RPB3 RNA polymerase subunit family. As to quaternary structure, part of the RNA polymerase complex.

The protein resides in the cytoplasm. The enzyme catalyses RNA(n) + a ribonucleoside 5'-triphosphate = RNA(n+1) + diphosphate. Functionally, DNA-dependent RNA polymerase (RNAP) catalyzes the transcription of DNA into RNA using the four ribonucleoside triphosphates as substrates. In Pyrobaculum aerophilum (strain ATCC 51768 / DSM 7523 / JCM 9630 / CIP 104966 / NBRC 100827 / IM2), this protein is DNA-directed RNA polymerase subunit Rpo3.